The sequence spans 3753 residues: Intermembrane lipid transfer protein VPS13C (3753 aa).

Residues 3–116 (LESVVADLLN…LQDVKQKELS (114 aa)) enclose the Chorein N-terminal domain. Position 132 is a phosphoserine (Ser-132). The segment covering 150–164 (GRKRKKHKKHFKKPF) has biased composition (basic residues). A disordered region spans residues 150–176 (GRKRKKHKKHFKKPFKGLDRSKDKPKE). The segment covering 165-176 (KGLDRSKDKPKE) has biased composition (basic and acidic residues). Phosphothreonine is present on Thr-614. Residue Ser-619 is modified to Phosphoserine. A Phosphothreonine modification is found at Thr-624. Phosphoserine occurs at positions 737, 842, 872, and 874. The short motif at 877 to 883 (EYFDAED) is the FFAT element. Ser-1979 and Ser-2473 each carry phosphoserine. The tract at residues 2415–3309 (DYSLKDRAPF…IQQDIDALNA (895 aa)) is required for late endosome/lysosome localization. The 251-residue stretch at 2766-3016 (LSVFSPYWLI…RLFAWADPTG (251 aa)) folds into the SHR-BD domain. Positions 3310 to 3753 (ELMETSMTDM…VRLLRPQLPS (444 aa)) are required for lipid droplet localization. Arg-3519 and Arg-3526 each carry omega-N-methylarginine. Lys-3538 bears the N6-acetyllysine mark. Ser-3641 is subject to Phosphoserine.

It belongs to the VPS13 family. Widely expressed.

The protein localises to the mitochondrion outer membrane. Its subcellular location is the lipid droplet. The protein resides in the endoplasmic reticulum membrane. It is found in the lysosome membrane. It localises to the late endosome membrane. Functionally, mediates the transfer of lipids between membranes at organelle contact sites. Necessary for proper mitochondrial function and maintenance of mitochondrial transmembrane potential. Involved in the regulation of PINK1/PRKN-mediated mitophagy in response to mitochondrial depolarization. This is Intermembrane lipid transfer protein VPS13C from Homo sapiens (Human).